Consider the following 487-residue polypeptide: Diacylglycerol kinase 4 (487 aa).

The 157-residue stretch at 86-242 folds into the DAGKc domain; it reads TPEVPLMVFV…LDSWNILITM (157 aa).

The protein belongs to the eukaryotic diacylglycerol kinase family. In terms of assembly, monomer. As to expression, highly expressed in pollen grains. Expressed in roots, hypocotyls, leaf vasculature, developing anthers and stigmas, and receptacles of siliques.

It localises to the endoplasmic reticulum. The protein localises to the cytoplasm. Its subcellular location is the cytosol. The catalysed reaction is a 1,2-diacyl-sn-glycerol + ATP = a 1,2-diacyl-sn-glycero-3-phosphate + ADP + H(+). Phosphorylates the second messenger diacylglycerol (DAG) to generate phosphatidic acid (PA), another important signaling molecule. PA is required for plant development and responses to abiotic stress and pathogen attack. May be involved in the accumulation of PA during cold stress. Involved in the regulation of PA and phosphatidylcholine biosynthesis in growing pollen tubes. Required for nitric oxide-dependent pollen tube growth and re-orientation responses. Functions together with DGK2 in male gametophyte development and biosynthesis of phosphatidylglycerol and phosphatidylinositol in the endoplasmic reticulum (ER). Involved in PA production for pollen grain growth, as well as leaf and root growth. Possesses guanylyl cyclase activity in vitro. In Arabidopsis thaliana (Mouse-ear cress), this protein is Diacylglycerol kinase 4.